The sequence spans 339 residues: Dual specificity protein phosphatase 12 (339 aa).

Methionine 1 carries the N-acetylmethionine modification. Positions 1-25 (MLEAQGSNHGCERQAPTASPASSAG) are disordered. The 145-residue stretch at 26–170 (HAVEVRPGLY…LKLYEAMGYE (145 aa)) folds into the Tyrosine-protein phosphatase domain. Cysteine 114 (phosphocysteine intermediate) is an active-site residue. 115–120 (HAGVSR) is a binding site for substrate. Serine 334 bears the Phosphoserine mark.

This sequence belongs to the protein-tyrosine phosphatase family. Non-receptor class dual specificity subfamily. In terms of assembly, monomer. It depends on Zn(2+) as a cofactor.

The protein localises to the nucleus. Its subcellular location is the cytoplasm. The protein resides in the cytosol. The catalysed reaction is O-phospho-L-tyrosyl-[protein] + H2O = L-tyrosyl-[protein] + phosphate. It catalyses the reaction O-phospho-L-seryl-[protein] + H2O = L-seryl-[protein] + phosphate. It carries out the reaction O-phospho-L-threonyl-[protein] + H2O = L-threonyl-[protein] + phosphate. Its function is as follows. Dual specificity phosphatase; can dephosphorylate both phosphotyrosine and phosphoserine or phosphothreonine residues. Can dephosphorylate glucokinase (in vitro). Has phosphatase activity with the synthetic substrate 6,8-difluoro-4-methylumbelliferyl phosphate and other in vitro substrates. This is Dual specificity protein phosphatase 12 (Dusp12) from Mus musculus (Mouse).